The chain runs to 59 residues: Large ribosomal subunit protein bL32c (59 aa).

It belongs to the bacterial ribosomal protein bL32 family.

It localises to the plastid. It is found in the chloroplast. In Physcomitrium patens (Spreading-leaved earth moss), this protein is Large ribosomal subunit protein bL32c.